Reading from the N-terminus, the 466-residue chain is ATP synthase subunit beta (466 aa).

ATP is bound at residue 153-160 (GGAGVGKT).

It belongs to the ATPase alpha/beta chains family. As to quaternary structure, F-type ATPases have 2 components, CF(1) - the catalytic core - and CF(0) - the membrane proton channel. CF(1) has five subunits: alpha(3), beta(3), gamma(1), delta(1), epsilon(1). CF(0) has three main subunits: a(1), b(2) and c(9-12). The alpha and beta chains form an alternating ring which encloses part of the gamma chain. CF(1) is attached to CF(0) by a central stalk formed by the gamma and epsilon chains, while a peripheral stalk is formed by the delta and b chains.

Its subcellular location is the cell membrane. The enzyme catalyses ATP + H2O + 4 H(+)(in) = ADP + phosphate + 5 H(+)(out). Produces ATP from ADP in the presence of a proton gradient across the membrane. The catalytic sites are hosted primarily by the beta subunits. In Clostridium acetobutylicum (strain ATCC 824 / DSM 792 / JCM 1419 / IAM 19013 / LMG 5710 / NBRC 13948 / NRRL B-527 / VKM B-1787 / 2291 / W), this protein is ATP synthase subunit beta.